A 308-amino-acid chain; its full sequence is Cell division protein FtsQ (308 aa).

Over 1–53 the chain is Cytoplasmic; that stretch reads MDSGGRIVYALNVEKTGFLRILSVTVLQRLYRRVFWFLFKCVAGIDVPRHAGS. Residues 54–74 traverse the membrane as a helical segment; the sequence is LAVFSFFFLSILYSISSGGYM. Topologically, residues 75-308 are periplasmic; sequence NHFMKVAISN…LLKMLKAGSV (234 aa). One can recognise a POTRA domain in the interval 87 to 155; the sequence is FLVTHVDMSG…DRLRISLVER (69 aa).

The protein belongs to the FtsQ/DivIB family. FtsQ subfamily.

The protein localises to the cell inner membrane. Functionally, essential cell division protein. In Bartonella bacilliformis, this protein is Cell division protein FtsQ.